The following is a 388-amino-acid chain: P2X purinoceptor 4 (388 aa).

Residues 1–33 lie on the Cytoplasmic side of the membrane; it reads MTGCCTVLGAFLFEYDTPRIVLIRSRKVGLMNR. The helical transmembrane segment at 34–54 threads the bilayer; it reads TVQLLILAYVIGWVFVWEKGY. Residues 55-338 lie on the Extracellular side of the membrane; sequence QETDSVVSSV…KFDIIPTMIN (284 aa). ATP is bound by residues lysine 67 and lysine 69. The CTP site is built by lysine 67 and lysine 69. Residues asparagine 75, asparagine 110, asparagine 131, asparagine 153, and asparagine 184 are each glycosylated (N-linked (GlcNAc...) asparagine). Intrachain disulfides connect cysteine 116-cysteine 165, cysteine 126-cysteine 149, and cysteine 132-cysteine 159. ATP contacts are provided by threonine 186 and leucine 188. Residue threonine 186 participates in CTP binding. N-linked (GlcNAc...) asparagine glycosylation is found at asparagine 199 and asparagine 208. Cystine bridges form between cysteine 217/cysteine 227 and cysteine 261/cysteine 270. ATP contacts are provided by asparagine 293, arginine 295, and lysine 313. 3 residues coordinate CTP: asparagine 293, arginine 295, and lysine 313. Residues 339–359 form a helical membrane-spanning segment; that stretch reads IGSGLALLGVATVLCDVIVLY. The Cytoplasmic segment spans residues 360-388; the sequence is CMKKRYYYREKKYKYVEDYEQGLGNQMEQ.

The protein belongs to the P2X receptor family. In terms of assembly, functional P2RXs are organized as homomeric and heteromeric trimers. Forms heterotrimer with P2RX1. Interacts with P2RX7 (via C-terminus); this interaction is functional only in the presence of ATP. Forms heterotrimer with P2RX4; functional differences between homomeric P2RX4 and P2RX4/6 heterotrimer are minor. Interacts with AP1M2.

The protein resides in the cell membrane. The protein localises to the lysosome membrane. The catalysed reaction is K(+)(in) = K(+)(out). It carries out the reaction Na(+)(in) = Na(+)(out). It catalyses the reaction Ca(2+)(in) = Ca(2+)(out). Activated by ATP. pH-dependent and inhibited by acidic pH. In terms of biological role, ATP-gated nonselective transmembrane cation channel permeable to potassium, sodium and calcium. CTP, but not GTP or UTP, functions as a weak affinity agonist for P2RX4. Activated by extracellularly released ATP, it plays multiple role in immunity and central nervous system physiology. Could also function as an ATP-gated cation channel of lysosomal membranes. This Bos taurus (Bovine) protein is P2X purinoceptor 4 (P2RX4).